An 804-amino-acid chain; its full sequence is DNA mismatch repair protein MutS (804 aa).

614–621 (GPNMAGKS) contacts ATP.

This sequence belongs to the DNA mismatch repair MutS family.

Its function is as follows. This protein is involved in the repair of mismatches in DNA. It is possible that it carries out the mismatch recognition step. This protein has a weak ATPase activity. This is DNA mismatch repair protein MutS from Ehrlichia ruminantium (strain Welgevonden).